The sequence spans 61 residues: Small ribosomal subunit protein uS14 (61 aa).

Zn(2+) contacts are provided by cysteine 24, cysteine 27, cysteine 40, and cysteine 43.

Belongs to the universal ribosomal protein uS14 family. Zinc-binding uS14 subfamily. As to quaternary structure, part of the 30S ribosomal subunit. Contacts proteins S3 and S10. Zn(2+) is required as a cofactor.

Functionally, binds 16S rRNA, required for the assembly of 30S particles and may also be responsible for determining the conformation of the 16S rRNA at the A site. The protein is Small ribosomal subunit protein uS14 of Syntrophotalea carbinolica (strain DSM 2380 / NBRC 103641 / GraBd1) (Pelobacter carbinolicus).